The chain runs to 226 residues: Protein AhpA (226 aa).

Transmembrane regions (helical) follow at residues 12 to 32 (SMISSIIILCIAIVSVILFGV) and 169 to 189 (GELIIIFLAGVLLASSIHYFL).

The protein belongs to the Smp family.

It is found in the cell inner membrane. Functionally, when anaerobically expressed in wild-type E.coli K12 confers a hemolytic phenotype, but not in an sheA mutant. Suggests it affects the expression of the latent E.coli K12 hemolysin sheA under anaerobic conditions. In Pasteurella multocida (strain Pm70), this protein is Protein AhpA (ahpA).